The sequence spans 196 residues: Imidazoleglycerol-phosphate dehydratase (196 aa).

The protein belongs to the imidazoleglycerol-phosphate dehydratase family.

It localises to the cytoplasm. The catalysed reaction is D-erythro-1-(imidazol-4-yl)glycerol 3-phosphate = 3-(imidazol-4-yl)-2-oxopropyl phosphate + H2O. The protein operates within amino-acid biosynthesis; L-histidine biosynthesis; L-histidine from 5-phospho-alpha-D-ribose 1-diphosphate: step 6/9. The polypeptide is Imidazoleglycerol-phosphate dehydratase (Ralstonia pickettii (strain 12J)).